The chain runs to 395 residues: MIMNLFKGMPKFTFLNKINPFSMALFNSAKMEKVVSATLKRGLDDEGDELEYDHEMDRLYSFPGEKSGKTNIHKKQKTNDKSTMFWMETLNRISNGEIHTEYEVHNFLIMGNGQTNRYIQQNIMEMINEINDRFTIWDYRLETDQLEKRDVDLMGTHVALIVNPPEKITTDIVVKFIGKMKEQGIRAGLIIVNQDEIVHGSAPMPLGIITHTFGSRILPLLAQNNITALTDKEDNVPPPPKNKYKKRVAIKEEVEYIPQPNADPFLLDTLTEITEEEDLANMVDYESVAKGKEIDNAEIEKTIKEYENIEEGIEDIVKYGYELELEKPTEMDEEEFEVMNQEETVPEEFVITDDLFTDAVYSPVSSDVEAELNKVLFESNEDVNDLDQELMVEFD.

Residues 288–318 (VAKGKEIDNAEIEKTIKEYENIEEGIEDIVK) adopt a coiled-coil conformation.

This is an uncharacterized protein from Ostreid herpesvirus 1 (isolate France) (OsHV-1).